The following is an 82-amino-acid chain: Pigment-dispersing hormone peptides (82 aa).

Positions Met1–Ser26 are cleaved as a signal peptide. Residue Ala80 is modified to Alanine amide.

It belongs to the arthropod PDH family. As to expression, expressed strongly in the head and weakly in the ventral nerve cord. Not detected in the midgut cecum or hindgut. In the cephalic neural complex, specifically localized to cells within the optic lobe, anteromedian protocerebrum, accessory lobe, tritocerebrum, and subesophageal ganglion.

It is found in the secreted. In terms of biological role, the pigment-dispersing hormone causes the migration of the distal retinal pigment into the proximal end of the pigment chromatophore cells and thus decreases the amount of light entering the retinulas. May also function as a neurotransmitter and/or neuromodulator. The polypeptide is Pigment-dispersing hormone peptides (Armadillidium vulgare (Pillbug)).